Consider the following 616-residue polypeptide: Dihydroxy-acid dehydratase (616 aa).

Mg(2+) is bound at residue aspartate 81. Cysteine 122 serves as a coordination point for [2Fe-2S] cluster. Positions 123 and 124 each coordinate Mg(2+). Residue lysine 124 is modified to N6-carboxylysine. Cysteine 195 provides a ligand contact to [2Fe-2S] cluster. Mg(2+) is bound at residue glutamate 491. The active-site Proton acceptor is the serine 517.

It belongs to the IlvD/Edd family. Homodimer. [2Fe-2S] cluster serves as cofactor. It depends on Mg(2+) as a cofactor.

The catalysed reaction is (2R)-2,3-dihydroxy-3-methylbutanoate = 3-methyl-2-oxobutanoate + H2O. The enzyme catalyses (2R,3R)-2,3-dihydroxy-3-methylpentanoate = (S)-3-methyl-2-oxopentanoate + H2O. The protein operates within amino-acid biosynthesis; L-isoleucine biosynthesis; L-isoleucine from 2-oxobutanoate: step 3/4. Its pathway is amino-acid biosynthesis; L-valine biosynthesis; L-valine from pyruvate: step 3/4. In terms of biological role, functions in the biosynthesis of branched-chain amino acids. Catalyzes the dehydration of (2R,3R)-2,3-dihydroxy-3-methylpentanoate (2,3-dihydroxy-3-methylvalerate) into 2-oxo-3-methylpentanoate (2-oxo-3-methylvalerate) and of (2R)-2,3-dihydroxy-3-methylbutanoate (2,3-dihydroxyisovalerate) into 2-oxo-3-methylbutanoate (2-oxoisovalerate), the penultimate precursor to L-isoleucine and L-valine, respectively. This Escherichia coli O9:H4 (strain HS) protein is Dihydroxy-acid dehydratase.